The chain runs to 360 residues: tRNA N6-adenosine threonylcarbamoyltransferase (360 aa).

Residues His-111 and His-115 each contribute to the Fe cation site. Substrate-binding positions include 134–138 (LVSGG), Asp-167, Gly-180, Asp-184, and Asn-279. Position 307 (Asp-307) interacts with Fe cation.

Belongs to the KAE1 / TsaD family. The cofactor is Fe(2+).

Its subcellular location is the cytoplasm. It carries out the reaction L-threonylcarbamoyladenylate + adenosine(37) in tRNA = N(6)-L-threonylcarbamoyladenosine(37) in tRNA + AMP + H(+). Its function is as follows. Required for the formation of a threonylcarbamoyl group on adenosine at position 37 (t(6)A37) in tRNAs that read codons beginning with adenine. Is involved in the transfer of the threonylcarbamoyl moiety of threonylcarbamoyl-AMP (TC-AMP) to the N6 group of A37, together with TsaE and TsaB. TsaD likely plays a direct catalytic role in this reaction. The sequence is that of tRNA N6-adenosine threonylcarbamoyltransferase from Acaryochloris marina (strain MBIC 11017).